We begin with the raw amino-acid sequence, 457 residues long: ATP synthase subunit beta (457 aa).

G147 to T154 provides a ligand contact to ATP.

It belongs to the ATPase alpha/beta chains family. As to quaternary structure, F-type ATPases have 2 components, CF(1) - the catalytic core - and CF(0) - the membrane proton channel. CF(1) has five subunits: alpha(3), beta(3), gamma(1), delta(1), epsilon(1). CF(0) has three main subunits: a(1), b(2) and c(9-12). The alpha and beta chains form an alternating ring which encloses part of the gamma chain. CF(1) is attached to CF(0) by a central stalk formed by the gamma and epsilon chains, while a peripheral stalk is formed by the delta and b chains.

It localises to the cell inner membrane. The enzyme catalyses ATP + H2O + 4 H(+)(in) = ADP + phosphate + 5 H(+)(out). Produces ATP from ADP in the presence of a proton gradient across the membrane. The catalytic sites are hosted primarily by the beta subunits. The protein is ATP synthase subunit beta of Pasteurella multocida (strain Pm70).